Here is a 130-residue protein sequence, read N- to C-terminus: Secreted RxLR effector protein 68 (130 aa).

The signal sequence occupies residues 1-29; the sequence is MRCVCASIRRTRIIEFLMFFALSSSTASC. A glycan (N-linked (GlcNAc...) asparagine) is linked at Asn-36. The RxLR motif lies at 45–48; the sequence is RWLR.

It belongs to the RxLR effector family.

The protein resides in the secreted. Its subcellular location is the host cytoplasm. It is found in the host nucleus. Its function is as follows. Effector that acts as a broad suppressor of cell death to interrupt plant immunity. Inhibits cell death induced by cell death-inducing proteins, including the PAMP elicitor INF1 from P.infestans. This Plasmopara viticola (Downy mildew of grapevine) protein is Secreted RxLR effector protein 68.